The primary structure comprises 586 residues: Septin-9 (586 aa).

Met1 carries the N-acetylmethionine modification. Residues 1 to 14 (MKKSYSGGTRTSSG) are compositionally biased toward low complexity. 3 disordered regions span residues 1–49 (MKKS…RVQT), 62–108 (KFQD…SRRT), and 134–268 (RAEV…PASR). A phosphoserine mark is found at Ser22 and Ser30. A phosphothreonine mark is found at Thr38, Thr42, and Thr49. Position 62 is an N6-acetyllysine (Lys62). Ser82, Ser85, Ser89, and Ser96 each carry phosphoserine. Residues 134-151 (RAEVLGHKTPEPAPRRTE) are compositionally biased toward basic and acidic residues. Thr142 bears the Phosphothreonine mark. Position 278 is a phosphotyrosine (Tyr278). The Septin-type G domain occupies 295 to 567 (QGFEFNIMVV…EAYRVKRLNE (273 aa)). The interval 305–312 (GQSGLGKS) is G1 motif. A GTP-binding site is contributed by 305 to 312 (GQSGLGKS). Phosphoserine occurs at positions 327 and 332. GTP is bound by residues Thr339, Gly365, 445–453 (KADTLTLEE), Gly501, and Arg516. Positions 362–365 (DTPG) are G3 motif. The G4 motif stretch occupies residues 444 to 447 (AKAD).

This sequence belongs to the TRAFAC class TrmE-Era-EngA-EngB-Septin-like GTPase superfamily. Septin GTPase family. As to quaternary structure, septins polymerize into heterooligomeric protein complexes that form filaments, and associate with cellular membranes, actin filaments, and microtubules. GTPase activity is required for filament formation. Interacts with SEPTIN2, SEPTIN6, SEPTIN7, SEPTIN11 and SEPTIN14. Interacts with RTKN and ARHGEF18. In a mesenchymal cell line, Rho/RTKN signals cause disruption of wild-type septin filaments, but not of those containing isoform 2 variants HNA Trp-106 and Phe-111. In a mesenchymal cell line, isoform 2 variants HNA Trp-106 and Phe-111, but not wild type, form filaments with SEPTIN4. As to expression, widely expressed. Isoforms are differentially expressed in testes, kidney, liver heart, spleen, brain, peripheral blood leukocytes, skeletal muscle and kidney. Specific isoforms appear to demonstrate tissue specificity. Isoform 5 is the most highly expressed in fetal tissue. Isoform 1 is detected in all tissues except the brain and thymus, while isoform 2, isoform 3, and isoform 4 are detected at low levels in approximately half of the fetal tissues.

It is found in the cytoplasm. The protein localises to the cytoskeleton. Its function is as follows. Filament-forming cytoskeletal GTPase. May play a role in cytokinesis (Potential). May play a role in the internalization of 2 intracellular microbial pathogens, Listeria monocytogenes and Shigella flexneri. The sequence is that of Septin-9 from Homo sapiens (Human).